We begin with the raw amino-acid sequence, 245 residues long: Tryptophan synthase alpha chain (245 aa).

Active-site proton acceptor residues include Glu35 and Asp46.

It belongs to the TrpA family. Tetramer of two alpha and two beta chains.

The enzyme catalyses (1S,2R)-1-C-(indol-3-yl)glycerol 3-phosphate + L-serine = D-glyceraldehyde 3-phosphate + L-tryptophan + H2O. It functions in the pathway amino-acid biosynthesis; L-tryptophan biosynthesis; L-tryptophan from chorismate: step 5/5. The alpha subunit is responsible for the aldol cleavage of indoleglycerol phosphate to indole and glyceraldehyde 3-phosphate. The polypeptide is Tryptophan synthase alpha chain (Sulfurisphaera tokodaii (strain DSM 16993 / JCM 10545 / NBRC 100140 / 7) (Sulfolobus tokodaii)).